The following is a 163-amino-acid chain: Lipoprotein signal peptidase (163 aa).

4 consecutive transmembrane segments (helical) span residues 5-25 (VLTF…TKSL), 37-57 (IIPG…FGML), 67-87 (LMLV…VFKS), and 91-111 (LSNL…GNLY). Residues Asp121 and Asp139 contribute to the active site. A helical membrane pass occupies residues 132-152 (WPAFNVADASITIGIALFIGY).

It belongs to the peptidase A8 family.

The protein localises to the cell inner membrane. It catalyses the reaction Release of signal peptides from bacterial membrane prolipoproteins. Hydrolyzes -Xaa-Yaa-Zaa-|-(S,diacylglyceryl)Cys-, in which Xaa is hydrophobic (preferably Leu), and Yaa (Ala or Ser) and Zaa (Gly or Ala) have small, neutral side chains.. It participates in protein modification; lipoprotein biosynthesis (signal peptide cleavage). This protein specifically catalyzes the removal of signal peptides from prolipoproteins. The polypeptide is Lipoprotein signal peptidase (Sulfurihydrogenibium sp. (strain YO3AOP1)).